The chain runs to 261 residues: 3-methyl-2-oxobutanoate hydroxymethyltransferase (261 aa).

Asp-44 and Asp-83 together coordinate Mg(2+). Residues 44 to 45 (DS), Asp-83, and Lys-113 each bind 3-methyl-2-oxobutanoate. Residue Glu-115 coordinates Mg(2+). Catalysis depends on Glu-183, which acts as the Proton acceptor.

This sequence belongs to the PanB family. Homodecamer; pentamer of dimers. It depends on Mg(2+) as a cofactor.

The protein localises to the cytoplasm. It carries out the reaction 3-methyl-2-oxobutanoate + (6R)-5,10-methylene-5,6,7,8-tetrahydrofolate + H2O = 2-dehydropantoate + (6S)-5,6,7,8-tetrahydrofolate. It participates in cofactor biosynthesis; (R)-pantothenate biosynthesis; (R)-pantoate from 3-methyl-2-oxobutanoate: step 1/2. Catalyzes the reversible reaction in which hydroxymethyl group from 5,10-methylenetetrahydrofolate is transferred onto alpha-ketoisovalerate to form ketopantoate. The sequence is that of 3-methyl-2-oxobutanoate hydroxymethyltransferase from Cyanothece sp. (strain PCC 7425 / ATCC 29141).